A 332-amino-acid polypeptide reads, in one-letter code: Biotin synthase (332 aa).

Residues 46-275 form the Radical SAM core domain; that stretch reads SDIQRASLLS…RARVRLSAGR (230 aa). Positions 61, 65, and 68 each coordinate [4Fe-4S] cluster. [2Fe-2S] cluster-binding residues include Cys106, Cys138, Cys198, and Arg270.

Belongs to the radical SAM superfamily. Biotin synthase family. As to quaternary structure, homodimer. It depends on [4Fe-4S] cluster as a cofactor. Requires [2Fe-2S] cluster as cofactor.

It carries out the reaction (4R,5S)-dethiobiotin + (sulfur carrier)-SH + 2 reduced [2Fe-2S]-[ferredoxin] + 2 S-adenosyl-L-methionine = (sulfur carrier)-H + biotin + 2 5'-deoxyadenosine + 2 L-methionine + 2 oxidized [2Fe-2S]-[ferredoxin]. Its pathway is cofactor biosynthesis; biotin biosynthesis; biotin from 7,8-diaminononanoate: step 2/2. Catalyzes the conversion of dethiobiotin (DTB) to biotin by the insertion of a sulfur atom into dethiobiotin via a radical-based mechanism. This chain is Biotin synthase, found in Methylobacterium sp. (strain 4-46).